A 276-amino-acid polypeptide reads, in one-letter code: Proteasome subunit beta type-8 (276 aa).

Residues Met-1–Tyr-33 are disordered. The propeptide at Met-1–Gly-72 is removed in mature form. Phosphothreonine is present on Asp-5. Thr-73 (nucleophile) is an active-site residue.

This sequence belongs to the peptidase T1B family. In terms of assembly, the 26S proteasome consists of a 20S proteasome core and two 19S regulatory subunits. The 20S proteasome core is composed of 28 subunits that are arranged in four stacked rings, resulting in a barrel-shaped structure. The two end rings are each formed by seven alpha subunits, and the two central rings are each formed by seven beta subunits. The catalytic chamber with the active sites is on the inside of the barrel. Component of the immunoproteasome, where it displaces the equivalent housekeeping subunit PSMB5. Component of the spermatoproteasome, a form of the proteasome specifically found in testis. Directly interacts with POMP. Interacts with TAP1. As to quaternary structure, (Microbial infection) Interacts with HIV-1 TAT protein. In terms of processing, autocleaved. The resulting N-terminal Thr residue of the mature subunit is responsible for the nucleophile proteolytic activity.

The protein resides in the cytoplasm. Its subcellular location is the nucleus. The catalysed reaction is Cleavage of peptide bonds with very broad specificity.. The proteasome is a multicatalytic proteinase complex which is characterized by its ability to cleave peptides with Arg, Phe, Tyr, Leu, and Glu adjacent to the leaving group at neutral or slightly basic pH. The proteasome has an ATP-dependent proteolytic activity. This subunit is involved in antigen processing to generate class I binding peptides. Replacement of PSMB5 by PSMB8 increases the capacity of the immunoproteasome to cleave model peptides after hydrophobic and basic residues. Involved in the generation of spliced peptides resulting from the ligation of two separate proteasomal cleavage products that are not contiguous in the parental protein. Acts as a major component of interferon gamma-induced sensitivity. Plays a key role in apoptosis via the degradation of the apoptotic inhibitor MCL1. May be involved in the inflammatory response pathway. In cancer cells, substitution of isoform 1 (E2) by isoform 2 (E1) results in immunoproteasome deficiency. Required for the differentiation of preadipocytes into adipocytes. The sequence is that of Proteasome subunit beta type-8 (PSMB8) from Homo sapiens (Human).